A 481-amino-acid polypeptide reads, in one-letter code: Glutamate--tRNA ligase (481 aa).

Positions 11–21 (PSPTGLLHIGN) match the 'HIGH' region motif. The short motif at 255 to 259 (KLSKR) is the 'KMSKS' region element. Residue Lys-258 participates in ATP binding.

This sequence belongs to the class-I aminoacyl-tRNA synthetase family. Glutamate--tRNA ligase type 1 subfamily. Monomer.

It localises to the cytoplasm. It carries out the reaction tRNA(Glu) + L-glutamate + ATP = L-glutamyl-tRNA(Glu) + AMP + diphosphate. Functionally, catalyzes the attachment of glutamate to tRNA(Glu) in a two-step reaction: glutamate is first activated by ATP to form Glu-AMP and then transferred to the acceptor end of tRNA(Glu). This Streptococcus pyogenes serotype M3 (strain ATCC BAA-595 / MGAS315) protein is Glutamate--tRNA ligase.